The sequence spans 62 residues: Large ribosomal subunit protein bL33c (62 aa).

This sequence belongs to the bacterial ribosomal protein bL33 family.

The protein resides in the plastid. The protein localises to the chloroplast. In Cyanidioschyzon merolae (strain NIES-3377 / 10D) (Unicellular red alga), this protein is Large ribosomal subunit protein bL33c.